The following is a 158-amino-acid chain: Arginine repressor (158 aa).

This sequence belongs to the ArgR family.

The protein resides in the cytoplasm. It functions in the pathway amino-acid biosynthesis; L-arginine biosynthesis [regulation]. Functionally, regulates arginine biosynthesis genes. This chain is Arginine repressor, found in Phocaeicola vulgatus (strain ATCC 8482 / DSM 1447 / JCM 5826 / CCUG 4940 / NBRC 14291 / NCTC 11154) (Bacteroides vulgatus).